Consider the following 350-residue polypeptide: Kievitone hydratase (350 aa).

A signal peptide spans 1 to 19 (MMISSVLVAGVVAVSAALA).

As to quaternary structure, homodimer. In terms of processing, glycosylated.

The protein localises to the secreted. It catalyses the reaction kievitone hydrate = kievitone + H2O. Functionally, converts fungitoxic kievitone to the less toxic kievitone hydrate, and thereby protects the pathogenic fungus against this phytoalexin. The chain is Kievitone hydratase (khs) from Fusarium solani subsp. phaseoli (Nectria haematococca).